The chain runs to 236 residues: MLGLRAMLPKGKHFAVVLGNVSRQITLPHNCRCITSASWTRPQQSQPQNFQQNRWLSVKSTKTESDDALQRIYYGTLAPRMKMVKFFSLSTSLAGLAAQPILLEQGMKIGGTGMAVFLCTVGGFFTFVTPLLLHFITKKYVTELHYNPLTEEYTATTISLLLQKIKTTFRPNDVVVPEVPGMFTSFLVNKRPLFVDPALFDDPEHYVKIMGYDKPIDFKLDLTPNPEKSKTSEEKQ.

A mitochondrion-targeting transit peptide spans 1 to 64; it reads MLGLRAMLPK…WLSVKSTKTE (64 aa). A run of 2 helical transmembrane segments spans residues 83–103 and 116–136; these read MVKF…PILL and VFLC…LHFI.

This sequence belongs to the TMEM70 family. In terms of assembly, associates with mitochondrial complex I assembly intermediates during its biogenesis.

It is found in the mitochondrion membrane. Functionally, scaffold protein that participates in the c-ring assembly of mitochondrial ATP synthase (F(1)F(0) ATP synthase or complex V). Also binds the mitochondrial proton-transporting ATP synthase complex I and may play a role in the stability of its membrane-bound subassemblies. The protein is Transmembrane protein 70 homolog, mitochondrial of Drosophila melanogaster (Fruit fly).